The sequence spans 118 residues: Large ribosomal subunit protein bL20 (118 aa).

Belongs to the bacterial ribosomal protein bL20 family.

Binds directly to 23S ribosomal RNA and is necessary for the in vitro assembly process of the 50S ribosomal subunit. It is not involved in the protein synthesizing functions of that subunit. The polypeptide is Large ribosomal subunit protein bL20 (Trichormus variabilis (strain ATCC 29413 / PCC 7937) (Anabaena variabilis)).